A 394-amino-acid chain; its full sequence is Saposin-like protein 11 (394 aa).

A signal peptide spans 1–18 (MSVFRFLLFLSLLVGSNA). 2 N-linked (GlcNAc...) asparagine glycosylation sites follow: N25 and N272. A Saposin B-type domain is found at 306 to 394 (GNMVCDICEK…SFCKHVPFCK (89 aa)). 3 disulfides stabilise this stretch: C310–C393, C313–C387, and C343–C359.

This chain is Saposin-like protein 11 (spp-11), found in Caenorhabditis elegans.